We begin with the raw amino-acid sequence, 690 residues long: Molting protein mlt-10 (690 aa).

Positions 1–18 (MRNLNLILFTALAAVTYA) are cleaved as a signal peptide. N-linked (GlcNAc...) asparagine glycans are attached at residues Asn42 and Asn204. Positions 219–285 (IKKLGEEAKR…MRKKEADEIR (67 aa)) form a coiled coil. N-linked (GlcNAc...) asparagine glycans are attached at residues Asn305 and Asn415. 5 helical membrane passes run 514 to 534 (PFIL…FIVL), 544 to 564 (LSPA…PLIL), 579 to 599 (FSPI…PGVF), 618 to 638 (VFTP…TPMV), and 643 to 663 (ILSP…FAVV).

Belongs to the mlt-10-like family. As to expression, expressed in the major body hypodermal syncytium (Hyp7), the dorsal and ventral ridges of the hypodermis, hypodermal cells in the head and tail, and the pharyngeal myoepithelium, but not the lateral seam cells.

The protein localises to the membrane. Its subcellular location is the secreted. In terms of biological role, required for the efficient removal of larval cuticles during the molting cycle as well as the synthesis of new cuticles. This chain is Molting protein mlt-10, found in Caenorhabditis elegans.